A 211-amino-acid polypeptide reads, in one-letter code: tRNA (guanine-N(7)-)-methyltransferase (211 aa).

4 residues coordinate S-adenosyl-L-methionine: glutamate 44, aspartate 69, aspartate 96, and aspartate 118. Aspartate 118 is a catalytic residue. Lysine 122 provides a ligand contact to substrate. Residues 124–129 (RHEKRR) are interaction with RNA. Substrate contacts are provided by residues aspartate 154 and 191-194 (TEYE).

This sequence belongs to the class I-like SAM-binding methyltransferase superfamily. TrmB family.

The catalysed reaction is guanosine(46) in tRNA + S-adenosyl-L-methionine = N(7)-methylguanosine(46) in tRNA + S-adenosyl-L-homocysteine. The protein operates within tRNA modification; N(7)-methylguanine-tRNA biosynthesis. Its function is as follows. Catalyzes the formation of N(7)-methylguanine at position 46 (m7G46) in tRNA. This is tRNA (guanine-N(7)-)-methyltransferase from Streptococcus pneumoniae (strain Taiwan19F-14).